We begin with the raw amino-acid sequence, 691 residues long: Elongation factor G (691 aa).

The 275-residue stretch at 8–282 (ERVRNIGIAA…AVVDYLPAPI (275 aa)) folds into the tr-type G domain. GTP is bound by residues 17–24 (AHIDAGKT), 81–85 (DTPGH), and 135–138 (NKMD).

Belongs to the TRAFAC class translation factor GTPase superfamily. Classic translation factor GTPase family. EF-G/EF-2 subfamily.

It localises to the cytoplasm. In terms of biological role, catalyzes the GTP-dependent ribosomal translocation step during translation elongation. During this step, the ribosome changes from the pre-translocational (PRE) to the post-translocational (POST) state as the newly formed A-site-bound peptidyl-tRNA and P-site-bound deacylated tRNA move to the P and E sites, respectively. Catalyzes the coordinated movement of the two tRNA molecules, the mRNA and conformational changes in the ribosome. This chain is Elongation factor G, found in Synechococcus sp. (strain CC9902).